The primary structure comprises 324 residues: Deoxyhypusine hydroxylase (324 aa).

HEAT-like PBS-type repeat units lie at residues Leu60 to Asp86 and Arg94 to Arg119. His62, Glu63, His95, and Glu96 together coordinate Fe cation. Positions Glu143 to Gln152 are enriched in basic and acidic residues. The segment at Glu143–Gln171 is disordered. 3 HEAT-like PBS-type repeats span residues Lys189 to Gly219, Phe227 to Asn253, and Val260 to Asp287. Residues His229, Glu230, His262, and Glu263 each coordinate Fe cation.

This sequence belongs to the deoxyhypusine hydroxylase family. Fe(2+) serves as cofactor.

It is found in the cytoplasm. The protein localises to the nucleus. It carries out the reaction [eIF5A protein]-deoxyhypusine + AH2 + O2 = [eIF5A protein]-hypusine + A + H2O. The protein operates within protein modification; eIF5A hypusination. Catalyzes the hydroxylation of the N(6)-(4-aminobutyl)-L-lysine intermediate to form hypusine, an essential post-translational modification only found in mature eIF-5A factor. The sequence is that of Deoxyhypusine hydroxylase (lia1) from Neurospora crassa (strain ATCC 24698 / 74-OR23-1A / CBS 708.71 / DSM 1257 / FGSC 987).